Here is a 692-residue protein sequence, read N- to C-terminus: Elongation factor G (692 aa).

A tr-type G domain is found at 8–282; it reads EKTRNIGIMA…AVLDYLPAPT (275 aa). GTP contacts are provided by residues 17–24, 81–85, and 135–138; these read AHIDAGKT, DTPGH, and NKMD.

It belongs to the TRAFAC class translation factor GTPase superfamily. Classic translation factor GTPase family. EF-G/EF-2 subfamily.

The protein resides in the cytoplasm. In terms of biological role, catalyzes the GTP-dependent ribosomal translocation step during translation elongation. During this step, the ribosome changes from the pre-translocational (PRE) to the post-translocational (POST) state as the newly formed A-site-bound peptidyl-tRNA and P-site-bound deacylated tRNA move to the P and E sites, respectively. Catalyzes the coordinated movement of the two tRNA molecules, the mRNA and conformational changes in the ribosome. The polypeptide is Elongation factor G (Bacillus velezensis (strain DSM 23117 / BGSC 10A6 / LMG 26770 / FZB42) (Bacillus amyloliquefaciens subsp. plantarum)).